The following is an 81-amino-acid chain: Photosystem I iron-sulfur center (81 aa).

4Fe-4S ferredoxin-type domains are found at residues 2–31 (SHSVKIYDTCIGCTQCVRACPTDVLEMIPW) and 39–68 (IASAPRTEDCVGCKRCESACPTDFLSVRVY). [4Fe-4S] cluster contacts are provided by C11, C14, C17, C21, C48, C51, C54, and C58.

The eukaryotic PSI reaction center is composed of at least 11 subunits. It depends on [4Fe-4S] cluster as a cofactor.

It is found in the plastid. The protein localises to the chloroplast thylakoid membrane. It catalyses the reaction reduced [plastocyanin] + hnu + oxidized [2Fe-2S]-[ferredoxin] = oxidized [plastocyanin] + reduced [2Fe-2S]-[ferredoxin]. In terms of biological role, apoprotein for the two 4Fe-4S centers FA and FB of photosystem I (PSI); essential for photochemical activity. FB is the terminal electron acceptor of PSI, donating electrons to ferredoxin. The C-terminus interacts with PsaA/B/D and helps assemble the protein into the PSI complex. Required for binding of PsaD and PsaE to PSI. PSI is a plastocyanin-ferredoxin oxidoreductase, converting photonic excitation into a charge separation, which transfers an electron from the donor P700 chlorophyll pair to the spectroscopically characterized acceptors A0, A1, FX, FA and FB in turn. The polypeptide is Photosystem I iron-sulfur center (Arabis hirsuta (Hairy rock-cress)).